A 439-amino-acid polypeptide reads, in one-letter code: Protein translocase subunit SecY (439 aa).

A run of 10 helical transmembrane segments spans residues 19–39 (ILFT…TAPG), 68–88 (YSLF…VQLL), 116–136 (YITL…FQAM), 151–171 (LMIG…GEQI), 176–196 (FGSG…PSAI), 216–236 (WIFV…TTFV), 269–289 (VIPV…LQFL), 312–332 (WTGM…YSFV), 373–393 (VGSL…NVWG), and 396–416 (KIVA…IQAV).

The protein belongs to the SecY/SEC61-alpha family. Component of the Sec protein translocase complex. Heterotrimer consisting of SecY, SecE and SecG subunits. The heterotrimers can form oligomers, although 1 heterotrimer is thought to be able to translocate proteins. Interacts with the ribosome. Interacts with SecDF, and other proteins may be involved. Interacts with SecA.

It is found in the cell membrane. Functionally, the central subunit of the protein translocation channel SecYEG. Consists of two halves formed by TMs 1-5 and 6-10. These two domains form a lateral gate at the front which open onto the bilayer between TMs 2 and 7, and are clamped together by SecE at the back. The channel is closed by both a pore ring composed of hydrophobic SecY resides and a short helix (helix 2A) on the extracellular side of the membrane which forms a plug. The plug probably moves laterally to allow the channel to open. The ring and the pore may move independently. The polypeptide is Protein translocase subunit SecY (Lactococcus lactis subsp. cremoris (Streptococcus cremoris)).